The primary structure comprises 132 residues: Small ribosomal subunit protein uS8 (132 aa).

The protein belongs to the universal ribosomal protein uS8 family. In terms of assembly, part of the 30S ribosomal subunit. Contacts proteins S5 and S12.

Its function is as follows. One of the primary rRNA binding proteins, it binds directly to 16S rRNA central domain where it helps coordinate assembly of the platform of the 30S subunit. This is Small ribosomal subunit protein uS8 from Rickettsia felis (strain ATCC VR-1525 / URRWXCal2) (Rickettsia azadi).